The primary structure comprises 376 residues: Putative glutamate--cysteine ligase 2-1 (376 aa).

Belongs to the glutamate--cysteine ligase type 2 family. YbdK subfamily.

It catalyses the reaction L-cysteine + L-glutamate + ATP = gamma-L-glutamyl-L-cysteine + ADP + phosphate + H(+). Functionally, ATP-dependent carboxylate-amine ligase which exhibits weak glutamate--cysteine ligase activity. The protein is Putative glutamate--cysteine ligase 2-1 of Rubrobacter xylanophilus (strain DSM 9941 / JCM 11954 / NBRC 16129 / PRD-1).